The following is a 115-amino-acid chain: Salivary anti-complement protein (115 aa).

Positions 1–22 are cleaved as a signal peptide; it reads MKFFYLIFSAIFFLADPALVKC. Cystine bridges form between Cys-26–Cys-108, Cys-41–Cys-92, and Cys-83–Cys-101.

In terms of assembly, may form multimers. Salivary gland (at protein level).

The protein localises to the secreted. In terms of biological role, salivary protein that inhibits the classical pathway of complement system activation in the host while having no inhibitory effect on the alternative or lectin pathways. Prevent cleavage of host C4 and consequently impairs the activation of factors downstream of C4b in the complement cascade. The polypeptide is Salivary anti-complement protein (Lutzomyia longipalpis (Sand fly)).